The following is a 144-amino-acid chain: Large ribosomal subunit protein uL15 (144 aa).

Residues 1–57 form a disordered region; that stretch reads MRFNELQPAKGSRFAGKRLGRGIGSGLGKTSGKGHKGQKARSGGYHKVGFEGGQMPL. Positions 21–31 are enriched in gly residues; it reads RGIGSGLGKTS.

Belongs to the universal ribosomal protein uL15 family. Part of the 50S ribosomal subunit.

In terms of biological role, binds to the 23S rRNA. This Dichelobacter nodosus (strain VCS1703A) protein is Large ribosomal subunit protein uL15.